Consider the following 577-residue polypeptide: 5'-nucleotidase (577 aa).

An N-terminal signal peptide occupies residues 1 to 30 (MPRVPSASATGSSALLSLLCAFSLGRAAPF). 4 residues coordinate Zn(2+): D39, H41, D86, and N118. A glycan (N-linked (GlcNAc...) asparagine) is linked at N135. Zn(2+) contacts are provided by H221 and H244. Residue N246 coordinates substrate. Residues N311 and N347 are each glycosylated (N-linked (GlcNAc...) asparagine). Intrachain disulfides connect C353/C358 and C365/C387. R354 is a substrate binding site. Substrate contacts are provided by Q390 and R395. N403 carries N-linked (GlcNAc...) asparagine glycosylation. A substrate-binding site is contributed by F417. Cysteines 476 and 479 form a disulfide. A substrate-binding site is contributed by 500 to 506 (YIAEGGD). S552 carries the GPI-anchor amidated serine lipid modification. A propeptide spans 553-577 (ATLPIINLKIGLSLFAFLTWFLHCS) (removed in mature form).

The protein belongs to the 5'-nucleotidase family. Homodimer. It depends on Zn(2+) as a cofactor.

Its subcellular location is the cell membrane. The enzyme catalyses a ribonucleoside 5'-phosphate + H2O = a ribonucleoside + phosphate. In terms of biological role, hydrolyzes extracellular nucleotides into membrane permeable nucleosides. In Diplobatis ommata (Ocellated electric ray), this protein is 5'-nucleotidase.